A 784-amino-acid polypeptide reads, in one-letter code: Toll-like receptor 2 (784 aa).

An N-terminal signal peptide occupies residues 1–20 (MPHALWTVWVLGAVISLSKE). The Extracellular segment spans residues 21–587 (GVPDQPSSLS…THLSVSECHR (567 aa)). A disulfide bond links cysteine 31 and cysteine 37. 19 LRR repeats span residues 54–77 (AVKS…WKCV), 78–101 (NLKA…SSLR), 102–125 (SLEH…RPLS), 126–150 (SLKF…SHLT), 151–175 (NLRI…GLTF), 176–199 (LEEL…SIQN), 200–223 (ISHL…TLSS), 224–250 (LEYL…TNTL), 251–278 (IKKF…YISG), 279–308 (VSEA…VIGK), 309–337 (LETL…LTER), 338–361 (VKRI…HLKS), 362–388 (LEYL…AWPS), 389–414 (LQTL…TLKN), 415–437 (LTKL…WPEK), 438–457 (MKYL…CIPQ), 458–478 (TLEV…ILPQ), 479–500 (VKEL…FLPM), and 501–524 (LLVM…SFQK). Asparagine 115 is a glycosylation site (N-linked (GlcNAc...) asparagine). Asparagine 199 is a glycosylation site (N-linked (GlcNAc...) asparagine). Cysteine 353 and cysteine 382 form a disulfide bridge. Asparagine 414 is a glycosylation site (N-linked (GlcNAc...) asparagine). Cysteines 432 and 454 form a disulfide. Asparagine 442 carries N-linked (GlcNAc...) asparagine glycosylation. An LRRCT domain is found at 525-579 (LKTLEAGGNNFICSCEFLSFTQEEQALDQILIDWPENYLCDSPSHVRGQRVQDTH). A helical transmembrane segment spans residues 588 to 608 (TALVSAVCCALFLSILLTGVL). Topologically, residues 609 to 784 (CHHFHGLWYM…WLNLRAAIKS (176 aa)) are cytoplasmic. The 144-residue stretch at 639-782 (ICYDAFVSYS…GFWLNLRAAI (144 aa)) folds into the TIR domain. Lysine 754 participates in a covalent cross-link: Glycyl lysine isopeptide (Lys-Gly) (interchain with G-Cter in ubiquitin). Residues 761–778 (YLEWPTDEAQQEGFWLNL) carry the ATG16L1-binding motif motif.

It belongs to the Toll-like receptor family. Interacts with LY96, TLR1 and TLR6 (via extracellular domain). TLR2 seems to exist in heterodimers with either TLR1 or TLR6 before stimulation by the ligand. The heterodimers form bigger oligomers in response to their corresponding ligands as well as further heterotypic associations with other receptors such as CD14 and/or CD36. Binds MYD88 (via TIR domain). Interacts with TICAM1. Interacts with CNPY3. Interacts with ATG16L1. Interacts with PPP1R11. Interacts with TICAM2. Interacts with TIRAP. In terms of processing, ubiquitinated at Lys-754 by PPP1R11, leading to its degradation. Deubiquitinated by USP2. Glycosylation of Asn-442 is critical for secretion of the N-terminal ectodomain of TLR2.

Its subcellular location is the membrane. The protein localises to the cytoplasmic vesicle. It localises to the phagosome membrane. The protein resides in the membrane raft. Cooperates with LY96 to mediate the innate immune response to bacterial lipoproteins and other microbial cell wall components. Cooperates with TLR1 or TLR6 to mediate the innate immune response to bacterial lipoproteins or lipopeptides. Acts via MYD88 and TRAF6, leading to NF-kappa-B activation, cytokine secretion and the inflammatory response. May also promote apoptosis in response to lipoproteins. Forms activation clusters composed of several receptors depending on the ligand, these clusters trigger signaling from the cell surface and subsequently are targeted to the Golgi in a lipid-raft dependent pathway. Forms the cluster TLR2:TLR6:CD14:CD36 in response to diacylated lipopeptides and TLR2:TLR1:CD14 in response to triacylated lipopeptides. This Equus caballus (Horse) protein is Toll-like receptor 2 (TLR2).